The primary structure comprises 259 residues: Probable ABC transporter permease protein RBE_1340 (259 aa).

5 helical membrane passes run 25–45 (IFSL…SLII), 49–69 (LFIG…SGAV), 148–168 (VIAA…IGVM), 195–215 (PIDV…ISII), and 237–257 (AVVN…ELFF).

It belongs to the MlaE permease family.

It is found in the cell inner membrane. Its function is as follows. Could be part of an ABC transporter complex. The sequence is that of Probable ABC transporter permease protein RBE_1340 from Rickettsia bellii (strain RML369-C).